The following is a 180-amino-acid chain: Large ribosomal subunit protein uL6 (180 aa).

The interval 158–180 (YSGKGISYKGEKIRRKEGKTASK) is disordered.

This sequence belongs to the universal ribosomal protein uL6 family. In terms of assembly, part of the 50S ribosomal subunit.

This protein binds to the 23S rRNA, and is important in its secondary structure. It is located near the subunit interface in the base of the L7/L12 stalk, and near the tRNA binding site of the peptidyltransferase center. The sequence is that of Large ribosomal subunit protein uL6 from Mycoplasmopsis synoviae (strain 53) (Mycoplasma synoviae).